The following is a 299-amino-acid chain: Probable lipid kinase YegS (299 aa).

In terms of domain architecture, DAGKc spans 2–133 (ANFPASLLIL…IDMARVNDKT (132 aa)). Residues Thr40, 66–72 (GDGTINE), and Thr95 contribute to the ATP site. Residues Leu215, Asp218, and Leu220 each contribute to the Mg(2+) site. The active-site Proton acceptor is Glu271.

It belongs to the diacylglycerol/lipid kinase family. YegS lipid kinase subfamily. The cofactor is Mg(2+). Requires Ca(2+) as cofactor.

Its subcellular location is the cytoplasm. Its function is as follows. Probably phosphorylates lipids; the in vivo substrate is unknown. In Salmonella agona (strain SL483), this protein is Probable lipid kinase YegS.